We begin with the raw amino-acid sequence, 158 residues long: Putative ribonucleoside-diphosphate reductase small chain B (158 aa).

Belongs to the ribonucleoside diphosphate reductase small chain family.

The chain is Putative ribonucleoside-diphosphate reductase small chain B (RNR2B) from Arabidopsis thaliana (Mouse-ear cress).